The sequence spans 85 residues: MKMTLIAILTCAAVLVLHTTAAEELEAESQLMEVGMPDTELAAVDEERLFECSVSCEIEKEGNKDCKKKKCKGGWKCKFNMCVKV.

An N-terminal signal peptide occupies residues 1-22 (MKMTLIAILTCAAVLVLHTTAA). The propeptide occupies 23 to 48 (EELEAESQLMEVGMPDTELAAVDEER). 3 disulfide bridges follow: cysteine 52–cysteine 66, cysteine 56–cysteine 77, and cysteine 71–cysteine 82.

This sequence belongs to the neurotoxin 12 (Hwtx-2) family. 02 (Hwtx-2) subfamily. Monomer. Expressed by the venom gland.

The protein localises to the secreted. Its function is as follows. Neurotoxin active on both insects and mammals. This chain is U4-theraphotoxin-Hhn1a, found in Cyriopagopus hainanus (Chinese bird spider).